A 175-amino-acid chain; its full sequence is Transcription factor E (175 aa).

Residues 4 to 88 enclose the HTH TFE/IIEalpha-type domain; sequence AEDLFINLAK…YWKPNIDQIN (85 aa).

It belongs to the TFE family. As to quaternary structure, monomer. Interaction with RNA polymerase subunits RpoF and RpoE is necessary for Tfe stimulatory transcription activity. Able to interact with Tbp and RNA polymerase in the absence of DNA promoter. Interacts both with the preinitiation and elongation complexes.

Its function is as follows. Transcription factor that plays a role in the activation of archaeal genes transcribed by RNA polymerase. Facilitates transcription initiation by enhancing TATA-box recognition by TATA-box-binding protein (Tbp), and transcription factor B (Tfb) and RNA polymerase recruitment. Not absolutely required for transcription in vitro, but particularly important in cases where Tbp or Tfb function is not optimal. It dynamically alters the nucleic acid-binding properties of RNA polymerases by stabilizing the initiation complex and destabilizing elongation complexes. Seems to translocate with the RNA polymerase following initiation and acts by binding to the non template strand of the transcription bubble in elongation complexes. The sequence is that of Transcription factor E from Saccharolobus islandicus (strain Y.N.15.51 / Yellowstone #2) (Sulfolobus islandicus).